A 42-amino-acid polypeptide reads, in one-letter code: Photosystem I reaction center subunit IX (42 aa).

The chain crosses the membrane as a helical span at residues 7 to 27 (YLSVAPVLSTLWFGALAGLLI).

The protein belongs to the PsaJ family.

The protein resides in the plastid. It is found in the chloroplast thylakoid membrane. Functionally, may help in the organization of the PsaE and PsaF subunits. In Guizotia abyssinica (Niger), this protein is Photosystem I reaction center subunit IX.